The sequence spans 208 residues: Large ribosomal subunit protein bL25 (208 aa).

It belongs to the bacterial ribosomal protein bL25 family. CTC subfamily. As to quaternary structure, part of the 50S ribosomal subunit; part of the 5S rRNA/L5/L18/L25 subcomplex. Contacts the 5S rRNA. Binds to the 5S rRNA independently of L5 and L18.

Its function is as follows. This is one of the proteins that binds to the 5S RNA in the ribosome where it forms part of the central protuberance. This is Large ribosomal subunit protein bL25 from Acidovorax ebreus (strain TPSY) (Diaphorobacter sp. (strain TPSY)).